The sequence spans 233 residues: Probable F-box protein At3g56670 (233 aa).

The region spanning 22–69 is the F-box domain; the sequence is HGGVIDIPLNTDSGVTKNTPGEIALLRFKSVSKLWSSIISSRRDFIES.

The sequence is that of Probable F-box protein At3g56670 from Arabidopsis thaliana (Mouse-ear cress).